The chain runs to 133 residues: Small ribosomal subunit protein uS8 (133 aa).

Belongs to the universal ribosomal protein uS8 family. In terms of assembly, part of the 30S ribosomal subunit. Contacts proteins S5 and S12.

In terms of biological role, one of the primary rRNA binding proteins, it binds directly to 16S rRNA central domain where it helps coordinate assembly of the platform of the 30S subunit. The polypeptide is Small ribosomal subunit protein uS8 (Leptospira interrogans serogroup Icterohaemorrhagiae serovar copenhageni (strain Fiocruz L1-130)).